A 298-amino-acid chain; its full sequence is Cyclin-dependent kinase 2 homolog (298 aa).

The Protein kinase domain maps to 4–284 (YHKMEKIGEG…AKEALKHDYF (281 aa)). ATP is bound by residues 10 to 18 (IGEGTYGVV) and K32. T14 carries the phosphothreonine modification. Y15 bears the Phosphotyrosine mark. D125 acts as the Proton acceptor in catalysis. T158 carries the phosphothreonine modification.

The protein belongs to the protein kinase superfamily. CMGC Ser/Thr protein kinase family. CDC2/CDKX subfamily. As to quaternary structure, may form a complex composed of at least the catalytic subunit CRK2 and a cyclin. Requires Mg(2+) as cofactor.

The protein resides in the cytoplasm. The catalysed reaction is L-seryl-[protein] + ATP = O-phospho-L-seryl-[protein] + ADP + H(+). The enzyme catalyses L-threonyl-[protein] + ATP = O-phospho-L-threonyl-[protein] + ADP + H(+). It catalyses the reaction [DNA-directed RNA polymerase] + ATP = phospho-[DNA-directed RNA polymerase] + ADP + H(+). With respect to regulation, phosphorylation at Thr-14 or Tyr-15 inactivates the enzyme, while phosphorylation at Thr-158 activates it. In terms of biological role, serine/threonine-protein kinase. Involved in the control of the cell cycle. Required for entry into S-phase and mitosis. Probable component of the kinase complex that phosphorylates the repetitive C-terminus of RNA polymerase II. The sequence is that of Cyclin-dependent kinase 2 homolog from Theileria annulata.